The primary structure comprises 245 residues: Orotidine 5'-phosphate decarboxylase (245 aa).

Substrate-binding positions include aspartate 22, lysine 44, 71-80 (DLKFHDIPNT), threonine 131, arginine 192, glutamine 201, glycine 221, and arginine 222. Catalysis depends on lysine 73, which acts as the Proton donor.

Belongs to the OMP decarboxylase family. Type 1 subfamily. In terms of assembly, homodimer.

The catalysed reaction is orotidine 5'-phosphate + H(+) = UMP + CO2. It functions in the pathway pyrimidine metabolism; UMP biosynthesis via de novo pathway; UMP from orotate: step 2/2. Functionally, catalyzes the decarboxylation of orotidine 5'-monophosphate (OMP) to uridine 5'-monophosphate (UMP). This is Orotidine 5'-phosphate decarboxylase from Escherichia coli O6:K15:H31 (strain 536 / UPEC).